Consider the following 548-residue polypeptide: Cytochrome P450 monooxygenase lcsK (548 aa).

Helical transmembrane passes span 28–48 (HAYP…LWAF) and 68–88 (VLLF…RLFF). N-linked (GlcNAc...) asparagine glycosylation is found at Asn-172, Asn-223, Asn-242, and Asn-404. Cys-487 contacts heme.

This sequence belongs to the cytochrome P450 family. Requires heme as cofactor.

The protein resides in the membrane. It participates in secondary metabolite biosynthesis. In terms of biological role, cytochrome P450 monooxygenase; part of the gene cluster that mediates the biosynthesis of the lipopeptide antibiotics leucinostatins that show extensive biological activities, including antimalarial, antiviral, antibacterial, antifungal, and antitumor activities, as well as phytotoxic. Leucinostatin A contains nine amino acid residues, including the unusual amino acid 4-methyl-L-proline (MePro), 2-amino-6-hydroxy-4-methyl-8-oxodecanoic acid (AHyMeOA), 3-hydroxyleucine (HyLeu), alpha-aminoisobutyric acid (AIB), beta-Ala, a 4-methylhex-2-enoic acid at the N-terminus as well as a N1,N1-dimethylpropane-1,2-diamine (DPD) at the C-terminus. The biosynthesis of leucinostatins is probably initiated with the assembly of 4-methylhex-2-enoic acid by a reducing PKS. Two reducing polyketide synthases, lcsB and lcsC, have been identified in the cluster and it is not clear which is the one that assembles 4-methylhex-2-enoic acid since both contain KS, AT, DH, cMT, ER, KR and ACP domains. The polyketide residue might be transferred to the NRPS lcsA, mediated by two additional enzymes, the acyl-CoA ligase lcsD and the thioesterase lcsE. The linear polyketide carboxylic acid, which is released from PKS, is converted to a CoA thioester by lcsD, and then lcsE hydrolyzes the thiol bond and shuttles the polyketide intermediate to lcsA. The C domain of the first module catalyzed the condensation of 4-methylhex-2-enoic acid and MePro carried by domain A1, followed by successive condensations of nine amino acids to trigger the elongation of the linear peptide. A5 and A6 domains of lcsA are proposed to incorporate leucine, A2 AHyMeOA, and A3 incorporates HyLeu. A4, A7 and A8 incorporate AIB. The AHyMeOA in leucinostatin A activated by the A2 might be produced by the second PKS (lcsB or lcsC) present within the cluster. The MePro is probably produced via leucine cyclization and may originate from a separate pathway, independent of the cluster. Another nonproteinogenic amino acid, beta-Ala, could be produced by an aspartic acid decarboxylase also localized outside of the cluster. Two candidates are VFPBJ_01400 and VFPBJ_10476. The final peptide scaffold may be released by the NAD(P)H-dependent thioester reductase (TE) at the C-terminal region of lcsA. Transamination of the lcsA product by the transaminase lcsP may produce DPD at the C-terminus. Further hydroxylation steps performed alternatively by the cytochrome P450 monooxygenases lcsI, lcsK and lcsN then yield the non-methylated leucinostatins precursor. It is also possible that leucines can be hydroxylated prior to their incorporation into the peptide. Varying extents of methylation then lead to the formation of leucinostatins A and B. The polypeptide is Cytochrome P450 monooxygenase lcsK (Purpureocillium lilacinum (Paecilomyces lilacinus)).